The primary structure comprises 47 residues: Defensin Ec-AMP-D1 (47 aa).

4 disulfide bridges follow: C3-C47, C14-C34, C20-C41, and C24-C43.

Has antifungal activity. Inhibits spore germination in F.graminearum (IC(50)=15 ug/ml), F.oxysporum (IC(50)=102 ug/ml), F.verticillioides (IC(50)=8.5 ug/ml) and D.maydis (IC(50)=12.5 ug/ml), but not in C.graminicola, B.cinerea and H.sativum at concentrations below 30 ug/ml. Inhibits hyphal development in P.infestans (IC(50)=25.5 ug/ml), but not release of zoospores. At concentrations above 100 ug/ml, induces morphological changes such as lysis of hyphae and sporangia in P.infestans. The sequence is that of Defensin Ec-AMP-D1 from Echinochloa crus-galli (Barnyard grass).